Here is a 168-residue protein sequence, read N- to C-terminus: G/U mismatch-specific DNA glycosylase (168 aa).

It belongs to the uracil-DNA glycosylase (UDG) superfamily. TDG/mug family. In terms of assembly, binds DNA as a monomer.

The protein resides in the cytoplasm. The enzyme catalyses Specifically hydrolyzes mismatched double-stranded DNA and polynucleotides, releasing free uracil.. Excises ethenocytosine and uracil, which can arise by alkylation or deamination of cytosine, respectively, from the corresponding mispairs with guanine in ds-DNA. It is capable of hydrolyzing the carbon-nitrogen bond between the sugar-phosphate backbone of the DNA and the mispaired base. The complementary strand guanine functions in substrate recognition. Required for DNA damage lesion repair in stationary-phase cells. The sequence is that of G/U mismatch-specific DNA glycosylase from Escherichia coli (strain UTI89 / UPEC).